Reading from the N-terminus, the 443-residue chain is UDP-glucuronic acid decarboxylase 4 (443 aa).

Alanine 2 carries the N-acetylalanine modification. Residues 2-43 (ASELTNRRHEIEQPEAESYYPKPIKPWFVAIRPIRYMLREQR) lie on the Cytoplasmic side of the membrane. The chain crosses the membrane as a helical; Signal-anchor for type II membrane protein span at residues 44 to 64 (LVFVLVGIAIATLGFTIFSKS). Residues 65 to 443 (SNHQPIPYDV…DSSTTSSSTE (379 aa)) lie on the Lumenal side of the membrane. 151-176 (DNFFTGRKENVMHHFNNPNFEMIRHD) is an NAD(+) binding site. Substrate is bound at residue arginine 260. The active-site Proton acceptor is tyrosine 263. Position 263–267 (263–267 (YDEGK)) interacts with NAD(+). Substrate is bound at residue asparagine 292. Arginine 304 is a binding site for NAD(+). Substrate contacts are provided by residues 305 to 309 (VVSNF), 322 to 329 (YGDGKQTR), and 389 to 393 (DPHKR).

This sequence belongs to the NAD(P)-dependent epimerase/dehydratase family. UDP-glucuronic acid decarboxylase subfamily. NAD(+) is required as a cofactor.

It localises to the golgi apparatus. The protein resides in the golgi stack membrane. The enzyme catalyses UDP-alpha-D-glucuronate + H(+) = UDP-alpha-D-xylose + CO2. It functions in the pathway nucleotide-sugar biosynthesis; UDP-alpha-D-xylose biosynthesis; UDP-alpha-D-xylose from UDP-alpha-D-glucuronate: step 1/1. Catalyzes the NAD-dependent decarboxylation of UDP-glucuronic acid to UDP-xylose. Necessary for the biosynthesis of the core tetrasaccharide in glycosaminoglycan biosynthesis. The protein is UDP-glucuronic acid decarboxylase 4 (UXS4) of Arabidopsis thaliana (Mouse-ear cress).